The following is a 319-amino-acid chain: MFTTVQPTNRSSLPDDLFTAIKELKRELNAVILAHYYQNSDIQDIADYIGDSLGLSQQAARTPADVIVFAGVHFMAETAKILNPDKLVLLPDLDAGCSLADSCHPEDFARFKAQYPDHIVISYINCSAEIKAMSDIICTSSNAVKIVNQIPAHQPIIFAPDRNLGRYVSQQTGRDLVLWQGSCIVHETFSERKIIELKVAHPEAKIIAHPECEASVLRHADYIGSTTALLNYSLKSSEKTFIVATEPGIIHQMQKSAPEKLFIPAPALNNCACNECPYMRLNTLEKLYLCMRDKTPEITISEDLRVKALLPIQRMLEMS.

Iminosuccinate contacts are provided by His-35 and Ser-52. Cys-97 is a [4Fe-4S] cluster binding site. Iminosuccinate-binding positions include 123–125 (YIN) and Ser-140. Residue Cys-183 coordinates [4Fe-4S] cluster. Iminosuccinate-binding positions include 209 to 211 (HPE) and Thr-226. Residue Cys-276 coordinates [4Fe-4S] cluster.

It belongs to the quinolinate synthase family. Type 2 subfamily. The cofactor is [4Fe-4S] cluster.

The protein resides in the cytoplasm. It carries out the reaction iminosuccinate + dihydroxyacetone phosphate = quinolinate + phosphate + 2 H2O + H(+). It participates in cofactor biosynthesis; NAD(+) biosynthesis; quinolinate from iminoaspartate: step 1/1. Functionally, catalyzes the condensation of iminoaspartate with dihydroxyacetone phosphate to form quinolinate. The sequence is that of Quinolinate synthase from Microcystis aeruginosa (strain NIES-843 / IAM M-2473).